Reading from the N-terminus, the 359-residue chain is MLYHLLYPLHTTYSYFNVFRYITFRTIYAAITALIICFLLGPWLIRKLRELKMGQVIRDDGPEAHLSKQGTPTMGGVLIIFAVVVSTLLWANLTIDYVWLVLMVTLGYGLIGFADDYRKLTRQSSRGVSGKVRLACEVCIALLVSVVLYAKPGFNSTIAIPFFKTVLPDLGWGYIFLSTFIIVGAANAVNLTDGLDGLAIGPAITCFMTYLLFAYFAGNFKIASYLQIPGVAGVGELSIFCGAIVGAGIGFLWYNTYPAQVFMGDTGSLSLGGALGCLAIVTKQEILLAIVGGIFVLETFSVIFQVGWFKLSHGKRIFRMAPIHHHFELKGWAEPKVIVRFWIISILLALLAISTLKLR.

10 helical membrane-spanning segments follow: residues Thr26–Arg46, Gly75–Ile95, Tyr97–Tyr117, Leu134–Phe154, Val166–Ala186, Gly197–Ala217, Gly233–Trp253, Val261–Val281, Ile286–Val306, and Lys336–Leu356.

It belongs to the glycosyltransferase 4 family. MraY subfamily. It depends on Mg(2+) as a cofactor.

It is found in the cell inner membrane. It carries out the reaction UDP-N-acetyl-alpha-D-muramoyl-L-alanyl-gamma-D-glutamyl-meso-2,6-diaminopimeloyl-D-alanyl-D-alanine + di-trans,octa-cis-undecaprenyl phosphate = di-trans,octa-cis-undecaprenyl diphospho-N-acetyl-alpha-D-muramoyl-L-alanyl-D-glutamyl-meso-2,6-diaminopimeloyl-D-alanyl-D-alanine + UMP. It participates in cell wall biogenesis; peptidoglycan biosynthesis. Functionally, catalyzes the initial step of the lipid cycle reactions in the biosynthesis of the cell wall peptidoglycan: transfers peptidoglycan precursor phospho-MurNAc-pentapeptide from UDP-MurNAc-pentapeptide onto the lipid carrier undecaprenyl phosphate, yielding undecaprenyl-pyrophosphoryl-MurNAc-pentapeptide, known as lipid I. This chain is Phospho-N-acetylmuramoyl-pentapeptide-transferase, found in Syntrophus aciditrophicus (strain SB).